The following is a 262-amino-acid chain: MSGTNRVAANLNMLFTNLPLLQRYGAAASAGFKLVEVSIPYTEPAEKLREAADEYHLKHTLINAPPGNWDDGFRGLASLKSAKKEFRKSLDTAIEYAKALGCCRVHVMAGIPKSDDDLENAHQTYSENVRFAAEKFKEHKLICLIEPINKYTIPGYHLNNYEDAMDVIQMDQSNNLKIQYDTFHAQQINGQIGAIMRKLKDYIGYIQVAQVPNRGACDTRGEIDYHFIFDEIRSINPSWVIGAEYLDAKPSFNWIENMSLSF.

Active-site proton donor/acceptor residues include glutamate 146 and glutamate 244.

The protein belongs to the hyi family.

It carries out the reaction 3-hydroxypyruvate = 2-hydroxy-3-oxopropanoate. Catalyzes the reversible isomerization between hydroxypyruvate and 2-hydroxy-3-oxopropanoate (also termed tartronate semialdehyde). The sequence is that of Putative hydroxypyruvate isomerase from Caenorhabditis elegans.